The primary structure comprises 82 residues: uncharacterized protein (82 aa).

Positions 1–19 (MKNLLKILLIIAFANPVFA) are cleaved as a signal peptide.

This is an uncharacterized protein from Rickettsia prowazekii (strain Madrid E).